Consider the following 346-residue polypeptide: T-box protein 12 (346 aa).

Residues 33-48 (DEEDVEVDVEDVDDVD) show a composition bias toward acidic residues. Positions 33–66 (DEEDVEVDVEDVDDVDLSSIPSKSPERSRGRPKI) are disordered. A DNA-binding region (T-box) is located at residues 86 to 268 (LWAKFFDLGT…KNPFAKGFRD (183 aa)).

Its subcellular location is the nucleus. In terms of biological role, transcription factor. Involved in cell fate determination; required to pattern the posterior hindgut. Involved in motor neuron fate determination and maintenance, acting as a transcriptional repressor to counteract gene activation by transcription factor unc-3 in a subset of motor neurons. Required throughout development to repress transcription by unc-3, probably acting by binding to specific promoter elements. Represses expression of VA and VB motor neuron-specific effector genes, such as DEG/ENaC channel del-1 and the innexin inx-12, in DA and DB motor neurons. Represses expression of transcription factor bnc-1, perhaps acting directly, in DA and DB motor neurons. This chain is T-box protein 12 (mab-9), found in Caenorhabditis elegans.